A 357-amino-acid polypeptide reads, in one-letter code: FNMESDSFEDFWKGEDLSNYSYSSTLPPFLLDAAPCEPESLEINKYFVVIIYALVFLLSLLGNSLVMLVILYSRVGRSVTDVYLLNLALADLLFALTLPIWAASKVNGWIFGTFLCKVVSLLKEVNFYSGILLLACISVDRYLAIVHATRTLTQKRYLVKFICLSIWGLSLLLALPVLLFRRTVYSSNVSPACYEDMGNNTANWRMLLRILPQSFGFIVPLLIMLFCYGFTLRTLFKAHMGQKHRAMRVIFAVVLIFLLCWLPYNLVLLADTLMRTQVIQETCERRNHIDRALDATEILGILHSCLNPLIYAFIGQKFRHGLLKILAIHGLISKDSLPKDSRPSFVGSSSGHTSTTL.

The Extracellular segment spans residues phenylalanine 1–lysine 45. Asparagine 19 carries an N-linked (GlcNAc...) asparagine glycan. The chain crosses the membrane as a helical span at residues tyrosine 46–tyrosine 72. The Cytoplasmic segment spans residues serine 73–aspartate 81. A helical membrane pass occupies residues valine 82 to alanine 102. The Extracellular segment spans residues alanine 103 to lysine 117. A disulfide bridge links cysteine 116 with cysteine 193. A helical transmembrane segment spans residues valine 118–valine 139. Over aspartate 140 to lysine 160 the chain is Cytoplasmic. The chain crosses the membrane as a helical span at residues phenylalanine 161–phenylalanine 180. Topologically, residues arginine 181–arginine 205 are extracellular. Residues methionine 206–tyrosine 228 traverse the membrane as a helical segment. The Cytoplasmic portion of the chain corresponds to glycine 229–arginine 248. Residues valine 249 to alanine 270 form a helical membrane-spanning segment. Residues aspartate 271–arginine 291 are Extracellular-facing. A helical transmembrane segment spans residues alanine 292–alanine 312. Residues phenylalanine 313–leucine 357 lie on the Cytoplasmic side of the membrane.

The protein belongs to the G-protein coupled receptor 1 family. Interacts with IL8. Interacts with GNAI2. Phosphorylated upon ligand binding; which is required for desensitization.

The protein localises to the cell membrane. Receptor for interleukin-8 which is a powerful neutrophil chemotactic factor. Binding of IL-8 to the receptor causes activation of neutrophils. This response is mediated via a G-protein that activates a phosphatidylinositol-calcium second messenger system. Binds to IL-8 with high affinity. Also binds with high affinity to CXCL3, GRO/MGSA and NAP-2. This chain is C-X-C chemokine receptor type 2 (CXCR2), found in Pan troglodytes (Chimpanzee).